The chain runs to 176 residues: Nascent polypeptide-associated complex subunit alpha (176 aa).

One can recognise an NAC-A/B domain in the interval 14 to 78 (SKNEKKAREL…AKVDDFTQRL (65 aa)). Residues 85-127 (LQQNEGVLPAGQDAVSKDPQSIQADMQAAADSATDKPSADDAV) form a disordered region. The 40-residue stretch at 137 to 176 (LNADDIELVMQQAGVPRAKAAKALKEHDSDIVNAIMALSG) folds into the UBA domain.

It belongs to the NAC-alpha family. In terms of assembly, part of the nascent polypeptide-associated complex (NAC), consisting of EGD2 and EGD1. NAC associates with ribosomes via EGD1.

The protein localises to the cytoplasm. It is found in the nucleus. Functionally, component of the nascent polypeptide-associated complex (NAC), a dynamic component of the ribosomal exit tunnel, protecting the emerging polypeptides from interaction with other cytoplasmic proteins to ensure appropriate nascent protein targeting. The NAC complex also promotes mitochondrial protein import by enhancing productive ribosome interactions with the outer mitochondrial membrane and blocks the inappropriate interaction of ribosomes translating non-secretory nascent polypeptides with translocation sites in the membrane of the endoplasmic reticulum. EGD2 may also be involved in transcription regulation. This is Nascent polypeptide-associated complex subunit alpha (EGD2) from Kluyveromyces lactis (strain ATCC 8585 / CBS 2359 / DSM 70799 / NBRC 1267 / NRRL Y-1140 / WM37) (Yeast).